Consider the following 542-residue polypeptide: Esterase S (542 aa).

The signal sequence occupies residues 1-22; it reads MTQILLPIALLCLFAASTLSNP. C81 and C100 are oxidised to a cystine. N-linked (GlcNAc...) asparagine glycosylation is present at N110. Residue S204 is the Acyl-ester intermediate of the active site. A disulfide bond links C256 and C268. A glycan (N-linked (GlcNAc...) asparagine) is linked at N396. Cysteines 507 and 528 form a disulfide.

Belongs to the type-B carboxylesterase/lipase family. As to quaternary structure, monomer. As to expression, specifically expressed in the ejaculatory bulbs of male.

It is found in the secreted. It carries out the reaction a carboxylic ester + H2O = an alcohol + a carboxylate + H(+). In terms of biological role, transferred from the ejaculatory bulbs of males to the female genitals upon copulation, plays an important role in the reproductive biology. This chain is Esterase S (EstS), found in Drosophila virilis (Fruit fly).